Consider the following 430-residue polypeptide: Multisubstrate adapter protein soc-1 (430 aa).

One can recognise a PH domain in the interval 7–133 (NIILEGSLKR…WVNEICKLCK (127 aa)). Positions 192–222 (SHNSLPSNPNYNNLPDPLESSRSETSSMYSS) are enriched in low complexity. 3 disordered regions span residues 192–246 (SHNS…TRHT), 275–303 (EDAEDSSGETLKLDTPEQYPESVTSSEGF), and 315–377 (RRAP…RNLD). Residues 341–369 (RNLSRNGVNENGNYSATFSSRTSNYQQSE) show a composition bias toward polar residues.

Interacts (via C-terminus) with sem-5 (probably via SH3 domain 2). Interacts with nicotinic acetylcholine receptor. May be phosphorylated.

In terms of biological role, adapter protein which modulates signaling mediated by several receptor tyrosine kinases. Plays a role in fluid homeostasis, probably downstream of receptor egl-15 and upstream of let-60/Ras. Involved in nicotinic acetylcholine receptor (nAChR)-mediated sensitivity to nicotine and levamisole and gamma-aminobutyric acid (GABA)receptor-mediated sensitivity to muscimol. Regulates synaptic levels of nAchR receptor subunit lev-1 and unc-38, and GABA receptor subunit unc-49 in the nerve cord, probably downstream of egl-15. Regulates motility. During the formation of neuromuscular junctions at the larval stage, down-regulates membrane protrusion from body wall muscles, probably downstream of egl-15. Promotes vulva induction and down-regulates fertility, probably downstream of receptor let-23. Down-regulates daf-2-mediated repression of dauer formation and positively regulates daf-2-mediated aging. May be involved in the recruitment of phosphatase ptp-2 to egl-15. In Caenorhabditis elegans, this protein is Multisubstrate adapter protein soc-1.